A 752-amino-acid polypeptide reads, in one-letter code: Photosystem I P700 chlorophyll a apoprotein A1 (752 aa).

Helical transmembrane passes span Ile73–Ala96, Leu159–His182, Met198–Leu222, Ile294–Tyr312, Trp349–Tyr372, Leu388–Val414, Ala436–His458, and Phe533–Leu551. [4Fe-4S] cluster is bound by residues Cys575 and Cys584. The next 2 helical transmembrane spans lie at His591–Trp612 and Ser666–Phe688. His677 provides a ligand contact to chlorophyll a'. Residues Met685 and Tyr693 each contribute to the chlorophyll a site. Trp694 contributes to the phylloquinone binding site. A helical transmembrane segment spans residues Ala726 to Ala746.

It belongs to the PsaA/PsaB family. In terms of assembly, the PsaA/B heterodimer binds the P700 chlorophyll special pair and subsequent electron acceptors. PSI consists of a core antenna complex that captures photons, and an electron transfer chain that converts photonic excitation into a charge separation. The eukaryotic PSI reaction center is composed of at least 11 subunits. P700 is a chlorophyll a/chlorophyll a' dimer, A0 is one or more chlorophyll a, A1 is one or both phylloquinones and FX is a shared 4Fe-4S iron-sulfur center. serves as cofactor.

Its subcellular location is the plastid. The protein localises to the chloroplast thylakoid membrane. The enzyme catalyses reduced [plastocyanin] + hnu + oxidized [2Fe-2S]-[ferredoxin] = oxidized [plastocyanin] + reduced [2Fe-2S]-[ferredoxin]. Functionally, psaA and PsaB bind P700, the primary electron donor of photosystem I (PSI), as well as the electron acceptors A0, A1 and FX. PSI is a plastocyanin/cytochrome c6-ferredoxin oxidoreductase, converting photonic excitation into a charge separation, which transfers an electron from the donor P700 chlorophyll pair to the spectroscopically characterized acceptors A0, A1, FX, FA and FB in turn. Oxidized P700 is reduced on the lumenal side of the thylakoid membrane by plastocyanin or cytochrome c6. The protein is Photosystem I P700 chlorophyll a apoprotein A1 of Thalassiosira pseudonana (Marine diatom).